The chain runs to 189 residues: Interferon alpha-D (189 aa).

The signal sequence occupies residues 1 to 23; the sequence is MAPAWSLLLALLLLSCNAICSLG. Intrachain disulfides connect Cys24–Cys122 and Cys52–Cys162.

Belongs to the alpha/beta interferon family.

The protein localises to the secreted. Produced by macrophages, IFN-alpha have antiviral activities. Interferon stimulates the production of two enzymes: a protein kinase and an oligoadenylate synthetase. The polypeptide is Interferon alpha-D (IFNAD) (Bos taurus (Bovine)).